The sequence spans 1039 residues: Alpha-mannosidase 2C1 (1039 aa).

Residues H259, D261, D371, and H576 each contribute to the Co(2+) site. The Nucleophile role is filled by D371.

Belongs to the glycosyl hydrolase 38 family. It depends on Co(2+) as a cofactor. As to expression, expressed in kidney and liver (at protein level). Widely expressed, with highest levels in lung, ovary and testis. Also detected at lower levels in heart, brain, liver, spleen, kidney and thymus.

The protein resides in the cytoplasm. It carries out the reaction Hydrolysis of terminal, non-reducing alpha-D-mannose residues in alpha-D-mannosides.. Inhibited by 1,4-dideoxy-1,4-imino-d-mannitol (DIM) and EDTA. Cleaves alpha 1,2-, alpha 1,3-, and alpha 1,6-linked mannose residues from glycoproteins. Involved in the degradation of free oligosaccharides in the cytoplasm. This chain is Alpha-mannosidase 2C1, found in Mus musculus (Mouse).